Consider the following 198-residue polypeptide: Virion infectivity factor (198 aa).

An RNA-binding region spans residues 76–115 (GERPWHLGHGIGLEWRQGKYSTQIDPETADQLIHTRYFTC). A Phosphothreonine; by host MAP4K1 modification is found at threonine 97. Positions 109 to 140 (HTRYFTCFAAGAVRQAILGERILTFCHFQSGH) match the HCCH motif motif. Phosphothreonine; by host is present on threonine 145. A BC-box-like motif motif is present at residues 145 to 154 (TLQFLAFRKV). Positions 152–170 (RKVVESQDKQPKGPRRPLP) are multimerization. A disordered region spans residues 159-198 (DKQPKGPRRPLPSVTKLTEDRWNKHRTTTGRRENHTLSGC). At serine 171 the chain carries Phosphoserine; by host MAP4K1. The tract at residues 177-178 (ED) is membrane association. Basic and acidic residues predominate over residues 188–198 (GRRENHTLSGC).

Belongs to the primate lentivirus group Vif protein family. As to quaternary structure, homomultimer; in vitro and presumably in vivo. Interacts with viral Pr55Gag precursor, host APOBEC3G, UBCE7IP1 isoform 3/ZIN, ABCE1 and possibly with SAT. Forms an E3 ligase complex by interacting with host CUL5 and elongin BC complex (ELOB and ELOC). Highly phosphorylated on serine and threonine residues. Thr-97 and Ser-171 are phosphorylated by the mitogen activated kinase MAP4K1. Post-translationally, polyubiquitinated and degraded by the proteasome in the presence of APOBEC3G.

The protein localises to the host cytoplasm. It is found in the host cell membrane. It localises to the virion. In terms of biological role, counteracts the innate antiviral activity of APOBEC3G. Forms a complex with host APOBEC3G thus preventing the entry of this lethally hypermutating enzyme into progeny virions. Functions as an adapter molecule, recruiting APOBEC3G to the ubiquitin-proteasome machinery. Targets APOBEC3G for degradation through the assembly with elongin BC complex, CUL5 and RBX1. Binds viral RNA and affects the stability of viral nucleoprotein core. May play a role in viral morphology. Interacts with host ABCE1, which seems to be involved in lentiviruses capsid formation and displays RNase L inhibitor activity. This interaction may play a role in protecting viral RNA from damage during viral assembly. May interact with host SAT, which is a regulator of polyamine cell level. This interaction may be relevant since polyamines affect viral RNA properties. The sequence is that of Virion infectivity factor from Pan troglodytes (Chimpanzee).